Consider the following 126-residue polypeptide: Phosphoribosyl-AMP cyclohydrolase (126 aa).

Asp-76 is a Mg(2+) binding site. Position 77 (Cys-77) interacts with Zn(2+). Positions 78 and 80 each coordinate Mg(2+). Cys-94 and Cys-101 together coordinate Zn(2+).

The protein belongs to the PRA-CH family. In terms of assembly, homodimer. Mg(2+) serves as cofactor. It depends on Zn(2+) as a cofactor.

The protein resides in the cytoplasm. It catalyses the reaction 1-(5-phospho-beta-D-ribosyl)-5'-AMP + H2O = 1-(5-phospho-beta-D-ribosyl)-5-[(5-phospho-beta-D-ribosylamino)methylideneamino]imidazole-4-carboxamide. The protein operates within amino-acid biosynthesis; L-histidine biosynthesis; L-histidine from 5-phospho-alpha-D-ribose 1-diphosphate: step 3/9. In terms of biological role, catalyzes the hydrolysis of the adenine ring of phosphoribosyl-AMP. The polypeptide is Phosphoribosyl-AMP cyclohydrolase (Vesicomyosocius okutanii subsp. Calyptogena okutanii (strain HA)).